Consider the following 516-residue polypeptide: Prolyl 4-hydroxylase subunit alpha-1 (516 aa).

Residue Asn97 is glycosylated (N-linked (GlcNAc...) asparagine). The stretch at 189–222 is one TPR repeat; sequence VYILDYLSYAVYQQGDLSKAMMLTKRLLELDPEH. Residue Asn243 is glycosylated (N-linked (GlcNAc...) asparagine). Residues 393–501 form the Fe2OG dioxygenase domain; the sequence is TAEELQVANY…KWVSNKWLHE (109 aa). Fe cation contacts are provided by His411, Asp413, and His482. A 2-oxoglutarate-binding site is contributed by Lys492.

It belongs to the P4HA family. In terms of assembly, heterotetramer of two alpha chains and two beta chains (the beta chain is the multi-functional PDI). Requires Fe(2+) as cofactor. It depends on L-ascorbate as a cofactor.

It is found in the endoplasmic reticulum lumen. It carries out the reaction L-prolyl-[collagen] + 2-oxoglutarate + O2 = trans-4-hydroxy-L-prolyl-[collagen] + succinate + CO2. Its function is as follows. Catalyzes the post-translational formation of 4-hydroxyproline in -Xaa-Pro-Gly- sequences in collagens and other proteins. The chain is Prolyl 4-hydroxylase subunit alpha-1 (P4HA1) from Gallus gallus (Chicken).